Reading from the N-terminus, the 100-residue chain is Apolipoprotein C-II (100 aa).

An N-terminal signal peptide occupies residues 1-22; that stretch reads MGTRFLLALFLVLLVLGFEVQG. Residues 66-74 form a lipid binding region; that stretch reads TVDEKLRDM. The tract at residues 78 to 100 is lipoprotein lipase cofactor; that stretch reads STAAVSTYAGIFTDQLLTLLKGD.

Belongs to the apolipoprotein C2 family. Post-translationally, proapolipoprotein C-II is synthesized as a sialic acid containing glycoprotein which is subsequently desialylated prior to its proteolytic processing. In terms of processing, proapolipoprotein C-II, the major form found in plasma undergoes proteolytic cleavage of its N-terminal hexapeptide to generate apolipoprotein C-II, which occurs as the minor form in plasma.

Its subcellular location is the secreted. Its function is as follows. Component of chylomicrons, very low-density lipoproteins (VLDL), low-density lipoproteins (LDL), and high-density lipoproteins (HDL) in plasma. Plays an important role in lipoprotein metabolism as an activator of lipoprotein lipase. Both proapolipoprotein C-II and apolipoprotein C-II can activate lipoprotein lipase. This is Apolipoprotein C-II (APOC2) from Otolemur garnettii (Small-eared galago).